The primary structure comprises 1397 residues: Ankyrin repeat domain-containing protein 30A (1397 aa).

ANK repeat units lie at residues 72 to 101 (QKRT…QLDV), 105 to 134 (EHRT…DINL), 138 to 167 (YGNT…VIEV), 171 to 200 (ASLT…NANA), 204 to 233 (YKCT…DVFA), and 237 to 271 (CGVT…HQNT). Positions 267–279 (NHQNTNPEGTSAG) are enriched in polar residues. 4 disordered regions span residues 267 to 376 (NHQN…TWPA), 453 to 482 (PTKE…EYSC), 782 to 807 (QTLR…WDSE), and 902 to 931 (TLRA…LRET). Composition is skewed to basic and acidic residues over residues 290 to 304 (RTPD…KTPD) and 312 to 326 (RTPD…KTPD). A compositionally biased stretch (polar residues) spans 455-467 (KESSTKASANDQR). Composition is skewed to basic and acidic residues over residues 782 to 800 (QTLR…KDYE) and 913 to 931 (SKQK…LRET). Coiled coils occupy residues 998–1188 (VLKK…KQDK) and 1282–1327 (EHAQ…FQLQ).

As to expression, mainly expressed in breast and testis. A very faint signal is detected in placenta. Also expressed in many breast cancer cells.

The sequence is that of Ankyrin repeat domain-containing protein 30A (ANKRD30A) from Homo sapiens (Human).